The following is an 862-amino-acid chain: Leucine--tRNA ligase (862 aa).

The 'HIGH' region motif lies at 51–61; sequence PYPSGSLHMGH. The 'KMSKS' region signature appears at 624-628; sequence KMSKS. Residue Lys627 participates in ATP binding.

Belongs to the class-I aminoacyl-tRNA synthetase family.

The protein resides in the cytoplasm. The catalysed reaction is tRNA(Leu) + L-leucine + ATP = L-leucyl-tRNA(Leu) + AMP + diphosphate. The sequence is that of Leucine--tRNA ligase from Prochlorococcus marinus (strain NATL1A).